A 715-amino-acid polypeptide reads, in one-letter code: Palmitoyltransferase ZDHHC5 (715 aa).

Over 1-13 (MPAESGKRFKPSK) the chain is Cytoplasmic. A helical membrane pass occupies residues 14 to 34 (YVPVSAAAIFLVGATTLFFAF). Over 35 to 38 (TCPG) the chain is Extracellular. Residues 39-59 (LSLYVSPAVPIYNAIMFLFVL) form a helical membrane-spanning segment. At 60 to 148 (ANFSMATFMD…NCIGRRNYRY (89 aa)) the chain is on the cytoplasmic side. The residue at position 91 (Y91) is a Phosphotyrosine; by LYN. One can recognise a DHHC domain in the interval 104 to 154 (KWCATCRFYRPPRCSHCSVCDNCVEEFDHHCPWVNNCIGRRNYRYFFLFLL). C134 acts as the S-palmitoyl cysteine intermediate in catalysis. A helical membrane pass occupies residues 149 to 169 (FFLFLLSLTAHIMGVFGFGLL). The Extracellular segment spans residues 170 to 191 (YVLYHIEELSGVRTAVTMAVMC). The chain crosses the membrane as a helical span at residues 192-212 (VAGLFFIPVAGLTGFHVVLVA). Over 213-715 (RGRTTNEQVT…VGGTTYEISV (503 aa)) the chain is Cytoplasmic. S247 carries the phosphoserine modification. Residues 289–715 (GELRRTKSKG…VGGTTYEISV (427 aa)) form a disordered region. T294 carries the phosphothreonine modification. 2 positions are modified to phosphoserine: S296 and S299. Position 303 is a phosphothreonine (T303). Phosphoserine is present on S345. T348 and T350 each carry phosphothreonine. Residues 359 to 373 (SSSSTSAAMPHSSSA) are compositionally biased toward low complexity. S380, S398, S406, and S409 each carry phosphoserine. Position 411 is a phosphothreonine (T411). Phosphoserine is present on residues S415, S425, S429, and S432. The span at 422–432 (SSGSRSSSLKS) shows a compositional bias: low complexity. At T436 the chain carries Phosphothreonine. Over residues 442–478 (QLQSIRSEGTTSTSYKSLANQTRNGSLSYDSLLTPSD) the composition is skewed to polar residues. Phosphoserine is present on S529. Y533 is subject to Phosphotyrosine; by FYN. S554 carries the post-translational modification Phosphoserine. R617 is modified (omega-N-methylarginine). Phosphoserine is present on S621. The residue at position 659 (T659) is a Phosphothreonine. Residues 666–677 (LKTTYSKSNGQP) show a composition bias toward polar residues. Phosphoserine is present on residues S684 and S694. Position 697 is an omega-N-methylarginine (R697).

Belongs to the DHHC palmitoyltransferase family. ERF2/ZDHHC9 subfamily. In terms of processing, phosphorylation regulates association with endocytic proteins and its subcellular localization. Phosphorylation by LYN during fatty acid uptake leads to inactivation of the activity. Post-translationally, autopalmitoylated. Palmitoylation of the C-terminal tail regulates stimulation-dependent plasma membrane motility.

The protein localises to the cell membrane. It localises to the synapse. It catalyses the reaction L-cysteinyl-[protein] + hexadecanoyl-CoA = S-hexadecanoyl-L-cysteinyl-[protein] + CoA. In terms of biological role, palmitoyltransferase that catalyzes the addition of palmitate onto various protein substrates such as CTNND2, CD36, GSDMD, NLRP3, NOD1, NOD2, STAT3 and S1PR1 thus plays a role in various biological processes including cell adhesion, inflammation, fatty acid uptake, bacterial sensing or cardiac functions. Plays an important role in the regulation of synapse efficacy by mediating palmitoylation of delta-catenin/CTNND2, thereby increasing synaptic delivery and surface stabilization of alpha-amino-3-hydroxy-5-methyl-4-isoxazole propionic acid receptors (AMPARs). Under basal conditions, remains at the synaptic membrane through FYN-mediated phosphorylation that prevents association with endocytic proteins. Neuronal activity enhances the internalization and trafficking of DHHC5 from spines to dendritic shafts where it palmitoylates delta-catenin/CTNND2. Regulates cell adhesion at the plasma membrane by palmitoylating GOLGA7B and DSG2. Plays a role in innate immune response by mediating the palmitoylation of NOD1 and NOD2 and their proper recruitment to the bacterial entry site and phagosomes. Also participates in fatty acid uptake by palmitoylating CD36 and thereby targeting it to the plasma membrane. Upon binding of fatty acids to CD36, gets phosphorylated by LYN leading to inactivation and subsequent CD36 caveolar endocytosis. Controls oligodendrocyte development by catalyzing STAT3 palmitoylation. Acts as a regulator of inflammatory response by mediating palmitoylation of NLRP3 and GSDMD. Palmitoylates NLRP3 to promote inflammasome assembly and activation. Activates pyroptosis by catalyzing palmitoylation of gasdermin-D (GSDMD), thereby promoting membrane translocation and pore formation of GSDMD. The protein is Palmitoyltransferase ZDHHC5 of Homo sapiens (Human).